The chain runs to 195 residues: ATP-dependent Clp protease proteolytic subunit 2 (195 aa).

Serine 95 (nucleophile) is an active-site residue. Residue histidine 120 is part of the active site.

This sequence belongs to the peptidase S14 family. Fourteen ClpP subunits assemble into 2 heptameric rings which stack back to back to give a disk-like structure with a central cavity, resembling the structure of eukaryotic proteasomes.

It localises to the cytoplasm. It catalyses the reaction Hydrolysis of proteins to small peptides in the presence of ATP and magnesium. alpha-casein is the usual test substrate. In the absence of ATP, only oligopeptides shorter than five residues are hydrolyzed (such as succinyl-Leu-Tyr-|-NHMec, and Leu-Tyr-Leu-|-Tyr-Trp, in which cleavage of the -Tyr-|-Leu- and -Tyr-|-Trp bonds also occurs).. Functionally, cleaves peptides in various proteins in a process that requires ATP hydrolysis. Has a chymotrypsin-like activity. Plays a major role in the degradation of misfolded proteins. This chain is ATP-dependent Clp protease proteolytic subunit 2, found in Methylococcus capsulatus (strain ATCC 33009 / NCIMB 11132 / Bath).